The chain runs to 482 residues: PAN domain-containing protein At5g03700 (482 aa).

Residues 1-31 (MEGLCLNSFTRVLLLLFVFLVFSHKWQRVNA) form the signal peptide. The PAN domain maps to 330–411 (CDKTTEFKVV…SKLGYFKVRE (82 aa)). 2 cysteine pairs are disulfide-bonded: C363/C385 and C367/C373. The chain crosses the membrane as a helical span at residues 425 to 445 (GMSLLAVIALVLMVAMVYVGF).

It localises to the membrane. The chain is PAN domain-containing protein At5g03700 from Arabidopsis thaliana (Mouse-ear cress).